A 657-amino-acid chain; its full sequence is Probable serine/threonine-protein kinase CA_C1728 (657 aa).

Positions 10–274 (YKIEEEIGVG…ELSNVKNNYV (265 aa)) constitute a Protein kinase domain. ATP-binding positions include 16 to 24 (IGVGGTAVV) and K39. D143 functions as the Proton acceptor in the catalytic mechanism. The disordered stretch occupies residues 286 to 334 (PAQIQNESNPNNKLDNDDTYYNGEPYNKEQPQEEPQEENEEPKNKIKGN). Residues 288-298 (QIQNESNPNNK) show a composition bias toward polar residues. 3 consecutive PASTA domains span residues 375–441 (SVSK…DISS), 443–509 (DTDQ…VISR), and 512–577 (EVKK…VIGR). A disordered region spans residues 581–657 (TAVQPPNNNN…TNTPNGTGQK (77 aa)). 3 stretches are compositionally biased toward low complexity: residues 584 to 600 (QPPN…QNQN), 613 to 637 (PTGG…PAGG), and 645 to 657 (GNVT…TGQK).

Belongs to the protein kinase superfamily. Ser/Thr protein kinase family.

It catalyses the reaction L-seryl-[protein] + ATP = O-phospho-L-seryl-[protein] + ADP + H(+). It carries out the reaction L-threonyl-[protein] + ATP = O-phospho-L-threonyl-[protein] + ADP + H(+). The chain is Probable serine/threonine-protein kinase CA_C1728 from Clostridium acetobutylicum (strain ATCC 824 / DSM 792 / JCM 1419 / IAM 19013 / LMG 5710 / NBRC 13948 / NRRL B-527 / VKM B-1787 / 2291 / W).